The primary structure comprises 377 residues: Actin-related protein T2 (377 aa).

The protein belongs to the actin family.

Its subcellular location is the cytoplasm. It localises to the cytoskeleton. This chain is Actin-related protein T2 (Actrt2), found in Mus musculus (Mouse).